The chain runs to 694 residues: Inactive protein-arginine deiminase type-6 (694 aa).

Phosphoserine is present on residues S10 and S446.

It belongs to the protein arginine deiminase family. In terms of assembly, homodimers. Associates with alpha-tubulin. Post-translationally, phosphorylation at Ser-10, possibly by RSK-type kinases, and Ser-446 creates binding sites for 14-3-3 proteins. Highly expressed in oocytes and weakly expressed in other somatic tissues.

It localises to the cytoplasm. Its subcellular location is the cytoplasmic vesicle. The protein localises to the secretory vesicle. It is found in the cortical granule. The protein resides in the nucleus. Structural constituent of cytoplasmic lattices, which plays a key role in early embryonic development. Cytoplasmic lattices consist in fibrous structures found in the cytoplasm of oocytes and preimplantation embryos. They are required to store maternal proteins critical for embryonic development, such as ribosomal proteins and proteins that control epigenetic reprogramming of the preimplantation embryo, and prevent their degradation or activation. In contrast to other members of the family, does not show protein-arginine deiminase activity due to its inability to bind Ca(2+). This is Inactive protein-arginine deiminase type-6 from Homo sapiens (Human).